The following is a 299-amino-acid chain: Bifunctional protein FolD (299 aa).

NADP(+)-binding positions include 168–170 (GRS), serine 193, and isoleucine 234.

Belongs to the tetrahydrofolate dehydrogenase/cyclohydrolase family. Homodimer.

The catalysed reaction is (6R)-5,10-methylene-5,6,7,8-tetrahydrofolate + NADP(+) = (6R)-5,10-methenyltetrahydrofolate + NADPH. It catalyses the reaction (6R)-5,10-methenyltetrahydrofolate + H2O = (6R)-10-formyltetrahydrofolate + H(+). Its pathway is one-carbon metabolism; tetrahydrofolate interconversion. Catalyzes the oxidation of 5,10-methylenetetrahydrofolate to 5,10-methenyltetrahydrofolate and then the hydrolysis of 5,10-methenyltetrahydrofolate to 10-formyltetrahydrofolate. The polypeptide is Bifunctional protein FolD (Bartonella quintana (strain Toulouse) (Rochalimaea quintana)).